A 912-amino-acid chain; its full sequence is Protein SLFN14 (912 aa).

The tract at residues 206–391 (ESTHVEFKRF…KVHKFKEALQ (186 aa)) is required for endoribonuclease activity. A required for ribosome binding region spans residues 392–571 (RHLFPVTQEE…QMGCEFFNLL (180 aa)). 593 to 600 (CFPGVRKT) contacts ATP.

Belongs to the Schlafen family. Subgroup III subfamily. Associates with ribosomes in an ATP-independent manner. Mg(2+) serves as cofactor. Requires Mn(2+) as cofactor. As to expression, expressed in megakaryocytes and platelets (at protein level). Weakly expressed in melanocytes and malignant melanoma cells.

It is found in the nucleus. In terms of biological role, shows no ribosome-associated and endoribonuclease activities. Displays polysome-associated endoribonuclease activity towards mRNAs and rRNAs. May play a role in RNA surveillance pathways by recognizing stalled ribosomes and triggering endonucleolytic cleavage of aberrant mRNAs. Cleaves different types of rRNAs and mRNAs in a magnesium- and manganese-dependent and ATP-independent manner. Involved in correct maturation of megakaryocytes and especially important for proplatelet extension. The chain is Protein SLFN14 from Homo sapiens (Human).